We begin with the raw amino-acid sequence, 78 residues long: Short neurotoxin 342 (78 aa).

Positions 1-21 (MKTLLLTLVVLTIVCLDLGYT) are cleaved as a signal peptide. 4 disulfides stabilise this stretch: cysteine 24–cysteine 43, cysteine 38–cysteine 57, cysteine 59–cysteine 70, and cysteine 71–cysteine 76.

It belongs to the three-finger toxin family. Short-chain subfamily. Type I alpha-neurotoxin sub-subfamily. Expressed by the venom gland.

The protein localises to the secreted. Functionally, binds to muscle nicotinic acetylcholine receptor (nAChR) and inhibit acetylcholine from binding to the receptor, thereby impairing neuromuscular transmission. The chain is Short neurotoxin 342 from Drysdalia coronoides (White-lipped snake).